A 194-amino-acid chain; its full sequence is Calcium channel flower (194 aa).

At 1-34 (MSFAEKITGLLARPNQQDPIGPEQPWYLKYGSRL) the chain is on the cytoplasmic side. The chain crosses the membrane as a helical span at residues 35–55 (LGIVAAFFAILFGLWNVFSII). Residues 56 to 65 (TLSVSCLVAG) lie on the Extracellular side of the membrane. The chain crosses the membrane as a helical span at residues 66 to 88 (ILQMVAGFVVMLLEAPCCFVCFG). Residues 89–106 (QVNEIAEKVESKPLYFRA) lie on the Cytoplasmic side of the membrane. A helical transmembrane segment spans residues 107–127 (GLYIAMAIPPIILCFGLASLF). Over 128 to 194 (GSGLIFGTGV…TGAVGTDSNV (67 aa)) the chain is Extracellular. 2 important for promoting apoptosis regions span residues 135–157 (TGVV…RAAA) and 135–192 (TGVV…GTDS).

This sequence belongs to the calcium channel flower family. Associates with the dally/ magu complex. In terms of assembly, homomultimer. Associates with the dally/ magu complex. Detected in the imaginal wing disk (at protein level). In terms of tissue distribution, detected throughout the adult brain, including the optic lobe but, at much lower levels of expression than isoform Lose-A. As to expression, detected in the optic lobe (at protein level). Detected throughout the adult brain, including the optic lobe. Expressed in damaged and undamaged optic lobe neurons. Expressed in optic lobe neurons, with higher levels of expression in suboptimal neurons. Specifically expressed in injury-damaged optic lobe neurons.

The protein resides in the cell membrane. The protein localises to the cytoplasmic vesicle. It localises to the secretory vesicle. Its subcellular location is the synaptic vesicle membrane. It is found in the presynaptic cell membrane. The protein resides in the endosome. The protein localises to the synaptic vesicle. With respect to regulation, channel activity is inhibited by La(3+), which reduces Ca(2+) influx and thus inhibits it's function in promoting activity-dependent bulk endocytosis (ADBE) in response to high stimuli. Its function is as follows. Transmembrane protein which mediates synaptic endocytosis, fitness-based cell culling, neuronal culling, morphogen gradient scaling, and calcium transport. Regulates synaptic endocytosis and hence couples exo- with endocytosis. Controls two major modes of synaptic vesicle (SV) endocytosis in the synaptic boutons of neuromuscular junctions (NMJs); Ca(2+) channel-independent Clathrin-mediated endocytosis (CME) in response to mild stimulation, and Ca(2+) channel-dependent activity-dependent bulk endocytosis (ADBE) in response to strong stimulation. Functions in ADBE and subsequent SV reformation from bulk endosomes by initiating Ca(2+) channel-dependent phosphatidylinositol 4,5-bisphosphate (PtdIns(4,5)P2) compartmentalization in synaptic boutons. There it acts at the periactive zone to provide the low Ca(2+) levels required to initiate Calcineurin activation and upregulate PtdIns(4,5)P2. Conversely PtdIns(4,5)P2 enhances fwe Ca(2+) channel-activity, establishing a positive feedback loop that induces PtdIns(4,5)P2 microdomain at the periactive zone. These microdomains trigger bulk membrane invagination (i.e. ADBE) by triggering actin polymerization while also promoting localization of fwe to bulk endosomes, thereby removing the ADBE trigger to reduce endocytosis and prevent excess membrane uptake. PtdIns(4,5)P2 then promotes SV reformation from the bulk endosomes, to coordinate ADBE and subsequent SV reformation. Different combinations of the flower isoforms at the cell membrane are also required for the identification and elimination of suboptimal or supernumerary cells during development, regeneration, and adulthood. Required for the recognition and elimination of unfit cells in the developing wing during cell competition. Also required for efficient identification and elimination of injured, damaged and/or dysfunctional neurons during regeneration of the adult brain. In the developing pupal retina, mediates the elimination of unwanted postmitotic neurons, including supernumerary photoreceptor neurons that form at the periphery of the retina and are contained within incomplete ommatidia units. Downstream of the flower fitness fingerprints, cells identified as unwanted or unfit are eliminated via apoptosis through the expression of ahuizotl (azot). However, the cells marked for elimination by the flower isoforms only undergo apoptosis if additional thresholds are met; (1) their neighboring fit/healthy cells express different levels of the fwe isoforms, and (2) the levels of the protective signal SPARC expressed by the loser or unwanted cells are unable to inhibit caspase activation. These additional thresholds for flower-mediated apoptosis, allows useful cells to recover from transient and limited stress before they are unnecessarily eliminated. Functions with dally and magu in a mechanism of scaling, which utilises apoptosis to ensure that the dpp morphogen gradient, which mediates organ growth, remains proportional to the size of the growing wing. In this mechanism, fwe represses dally- and Magu-dependent activity in expanding the gradient, and dally/Magu inhibits fwe-dependent apoptosis to keep cell death rate low. When the levels of these different proteins are optimally regulated the gradient correctly scales with organ growth but when this fails, fwe-mediated apoptosis is activated to trim the developing tissue to match the correct size of the gradient. Functions with the other flower isoforms to produce tissue-specific fitness fingerprints that identify unfit or fit cells during cell selection processes in order to maintain tissue health. In the wing imaginal disk, this isoform is highly expressed in healthy/normal cells but is down-regulated in cells with decreased fitness. During cell competition, if levels of this isoform in unfit cells is lower than in the surrounding neighboring cells, the suboptimal cells are recognized as 'loser' cells, and undergo elimination via apoptosis to be replaced by the surrounding healthy 'winner' cell population. In terms of biological role, functions with the other flower isoforms to produce tissue-specific fitness fingerprints that identify unfit or fit cells during cell selection processes in order to maintain tissue health. In the wing imaginal disk, this isoform displays low levels of expression in healthy/normal cells but is up-regulated in cells with decreased fitness. During cell competition, if levels of this isoform in unfit cells is higher than in the surrounding neighboring cells, the suboptimal cells are recognized as 'loser' cells, and undergo elimination via apoptosis to be replaced by the surrounding healthy 'winner' cell population. Functionally, functions with the other flower isoforms to produce tissue-specific fitness fingerprints that identify unfit cells for cell selection processes during development, regeneration, and to maintain tissue health. During cell competition in certain tissues, marks suboptimal or damaged cells as 'loser' cells. In cells of the wing imaginal disk and damaged or dysfunctional neurons in the adult optic lobe, this isoform displays low to no expression in healthy/normal cells but is up-regulated in cells with decreased fitness or damage-affected neurons. During cell competition, if levels of this isoform in unfit cells is higher than in the surrounding neighboring cells, the suboptimal cells are recognized as 'loser' cells, and undergo elimination via apoptosis to be replaced by the surrounding healthy/undamaged 'winner' cell population. In the developing pupal retina, also required for the recognition and elimination of postmitotic neurons, including supernumerary photoreceptor neurons that form at the periphery of the retina and are contained within incomplete ommatidia units. Activity at the peripheral retina is induced by the wg signaling pathway but, once activated, it promotes apoptosis of supernumerary photoreceptor neurons independently of wg signaling and snail function. In Drosophila melanogaster (Fruit fly), this protein is Calcium channel flower (fwe).